The chain runs to 726 residues: Catalase-peroxidase (726 aa).

Over residues 1–12 the composition is skewed to polar residues; that stretch reads MSTPSDQHNTLS. The tract at residues 1-34 is disordered; it reads MSTPSDQHNTLSAGKCPFHQGNSNQTAGGGTSSR. A cross-link (tryptophyl-tyrosyl-methioninium (Trp-Tyr) (with M-252)) is located at residues 105-226; it reads WHSAGTYRSA…LGATEMGLIY (122 aa). The active-site Proton acceptor is His106. Residues 226–252 constitute a cross-link (tryptophyl-tyrosyl-methioninium (Tyr-Met) (with W-105)); that stretch reads YVNPEGPNHSGDPASAAPAIRATFGNM. Position 267 (His267) interacts with heme b.

Belongs to the peroxidase family. Peroxidase/catalase subfamily. In terms of assembly, homodimer or homotetramer. It depends on heme b as a cofactor. In terms of processing, formation of the three residue Trp-Tyr-Met cross-link is important for the catalase, but not the peroxidase activity of the enzyme.

The enzyme catalyses H2O2 + AH2 = A + 2 H2O. It catalyses the reaction 2 H2O2 = O2 + 2 H2O. Its function is as follows. Bifunctional enzyme with both catalase and broad-spectrum peroxidase activity. The sequence is that of Catalase-peroxidase from Cronobacter sakazakii (strain ATCC BAA-894) (Enterobacter sakazakii).